A 190-amino-acid polypeptide reads, in one-letter code: Peptidyl-tRNA hydrolase (190 aa).

Tyrosine 14 serves as a coordination point for tRNA. The active-site Proton acceptor is histidine 19. TRNA-binding residues include tyrosine 64, asparagine 66, and asparagine 112.

Belongs to the PTH family. In terms of assembly, monomer.

The protein resides in the cytoplasm. The enzyme catalyses an N-acyl-L-alpha-aminoacyl-tRNA + H2O = an N-acyl-L-amino acid + a tRNA + H(+). Hydrolyzes ribosome-free peptidyl-tRNAs (with 1 or more amino acids incorporated), which drop off the ribosome during protein synthesis, or as a result of ribosome stalling. Its function is as follows. Catalyzes the release of premature peptidyl moieties from peptidyl-tRNA molecules trapped in stalled 50S ribosomal subunits, and thus maintains levels of free tRNAs and 50S ribosomes. This Chlorobium chlorochromatii (strain CaD3) protein is Peptidyl-tRNA hydrolase.